The sequence spans 260 residues: Carbonic anhydrase 2 (260 aa).

Ser2 carries the N-acetylserine modification. At Ser2 the chain carries Phosphoserine. Residues 3–259 (HHWGYGKHNG…LKGRQVKASF (257 aa)) enclose the Alpha-carbonic anhydrase domain. His64 serves as the catalytic Proton donor/acceptor. Positions 94, 96, and 119 each coordinate Zn(2+). Phosphoserine is present on residues Ser165 and Ser172. 198–199 (TT) provides a ligand contact to substrate.

This sequence belongs to the alpha-carbonic anhydrase family. As to quaternary structure, interacts with SLC4A4 and SLC26A6. Interaction with SLC4A7 regulates SLC4A7 transporter activity. Zn(2+) serves as cofactor.

It is found in the cytoplasm. Its subcellular location is the cell membrane. The catalysed reaction is hydrogencarbonate + H(+) = CO2 + H2O. It catalyses the reaction urea = cyanamide + H2O. Inhibited by acetazolamide. Its function is as follows. Catalyzes the reversible hydration of carbon dioxide. Can also hydrate cyanamide to urea. Involved in the regulation of fluid secretion into the anterior chamber of the eye. Essential for bone resorption and osteoclast differentiation. Contributes to intracellular pH regulation in the duodenal upper villous epithelium during proton-coupled peptide absorption. Stimulates the chloride-bicarbonate exchange activity of SLC26A6. This chain is Carbonic anhydrase 2 (CA2), found in Oryctolagus cuniculus (Rabbit).